The following is a 475-amino-acid chain: Putative aldehyde dehydrogenase SERP1729 (475 aa).

Residue 201–207 (GDGSGVG) coordinates NAD(+). Residues E245 and C279 contribute to the active site.

This sequence belongs to the aldehyde dehydrogenase family.

It catalyses the reaction an aldehyde + NAD(+) + H2O = a carboxylate + NADH + 2 H(+). This is Putative aldehyde dehydrogenase SERP1729 from Staphylococcus epidermidis (strain ATCC 35984 / DSM 28319 / BCRC 17069 / CCUG 31568 / BM 3577 / RP62A).